The following is a 143-amino-acid chain: Large ribosomal subunit protein uL11 (143 aa).

It belongs to the universal ribosomal protein uL11 family. As to quaternary structure, part of the ribosomal stalk of the 50S ribosomal subunit. Interacts with L10 and the large rRNA to form the base of the stalk. L10 forms an elongated spine to which L12 dimers bind in a sequential fashion forming a multimeric L10(L12)X complex. One or more lysine residues are methylated.

Its function is as follows. Forms part of the ribosomal stalk which helps the ribosome interact with GTP-bound translation factors. The polypeptide is Large ribosomal subunit protein uL11 (Polynucleobacter asymbioticus (strain DSM 18221 / CIP 109841 / QLW-P1DMWA-1) (Polynucleobacter necessarius subsp. asymbioticus)).